The sequence spans 556 residues: Formate--tetrahydrofolate ligase (556 aa).

65 to 72 (TPAGEGKT) lines the ATP pocket.

The protein belongs to the formate--tetrahydrofolate ligase family.

It carries out the reaction (6S)-5,6,7,8-tetrahydrofolate + formate + ATP = (6R)-10-formyltetrahydrofolate + ADP + phosphate. It functions in the pathway one-carbon metabolism; tetrahydrofolate interconversion. The polypeptide is Formate--tetrahydrofolate ligase (Peptoclostridium acidaminophilum (Eubacterium acidaminophilum)).